Consider the following 501-residue polypeptide: Zinc finger protein 704 (501 aa).

Polar residues predominate over residues 80 to 96; that stretch reads SLKSTCNGGQRDGLTQG. Disordered stretches follow at residues 80–138, 183–203, and 216–267; these read SLKS…HTRS, PLVRSPPVKVSEGLNGSWKDG, and WSWS…LFDE. The span at 115-137 shows a compositional bias: basic and acidic residues; the sequence is EEPRVLEHKRTGRALETEKDHTR. The C2H2-type zinc finger occupies 281–306; sequence FKCLWKNCGKVLSTAAGIQRHIRTVH. 4 disordered regions span residues 340–380, 398–419, 427–446, and 453–472; these read SLSP…SRSA, PVTIPSTSSTGFTPSSSSFSIS, FTGTSASPTHSRTQGFGEQH, and LSSPPRAAGSLSRKSRGEGK. Residues 368 to 380 show a composition bias toward low complexity; that stretch reads SESSSSTPLSRSA. A CR1 motif is present at residues 472-476; that stretch reads KKCRK. The CR2 signature appears at 490-494; sequence CRWKK.

It is found in the nucleus. Transcription factor. This chain is Zinc finger protein 704 (znf704), found in Danio rerio (Zebrafish).